A 614-amino-acid polypeptide reads, in one-letter code: Translation initiation factor IF-2 (614 aa).

Positions 115–283 (ARAPIVTIMG…ILLIAELNNY (169 aa)) constitute a tr-type G domain. Residues 124 to 131 (GHVDHGKT) are G1. Residue 124 to 131 (GHVDHGKT) participates in GTP binding. Residues 149–153 (GITQH) are G2. Residues 170 to 173 (DTPG) form a G3 region. Residues 170–174 (DTPGH) and 224–227 (NKMD) each bind GTP. The interval 224 to 227 (NKMD) is G4. Residues 260–262 (SAL) form a G5 region.

It belongs to the TRAFAC class translation factor GTPase superfamily. Classic translation factor GTPase family. IF-2 subfamily.

The protein resides in the cytoplasm. Functionally, one of the essential components for the initiation of protein synthesis. Protects formylmethionyl-tRNA from spontaneous hydrolysis and promotes its binding to the 30S ribosomal subunits. Also involved in the hydrolysis of GTP during the formation of the 70S ribosomal complex. This Ureaplasma parvum serovar 3 (strain ATCC 27815 / 27 / NCTC 11736) protein is Translation initiation factor IF-2.